Reading from the N-terminus, the 330-residue chain is Aspartate--ammonia ligase (330 aa).

This sequence belongs to the class-II aminoacyl-tRNA synthetase family. AsnA subfamily.

The protein resides in the cytoplasm. It catalyses the reaction L-aspartate + NH4(+) + ATP = L-asparagine + AMP + diphosphate + H(+). Its pathway is amino-acid biosynthesis; L-asparagine biosynthesis; L-asparagine from L-aspartate (ammonia route): step 1/1. In Serratia proteamaculans (strain 568), this protein is Aspartate--ammonia ligase.